The sequence spans 477 residues: uncharacterized protein (477 aa).

12 helical membrane-spanning segments follow: residues leucine 31–threonine 51, leucine 60–phenylalanine 80, leucine 103–leucine 123, methionine 130–glycine 150, leucine 177–leucine 197, leucine 205–tryptophan 225, alanine 248–glycine 268, valine 291–tryptophan 311, isoleucine 334–alanine 354, isoleucine 359–valine 379, glycine 384–isoleucine 404, and valine 433–valine 453.

Belongs to the PucC family.

Its subcellular location is the cell membrane. This is an uncharacterized protein from Rhodobacter capsulatus (Rhodopseudomonas capsulata).